The following is a 136-amino-acid chain: Large ribosomal subunit protein uL16 (136 aa).

It belongs to the universal ribosomal protein uL16 family. As to quaternary structure, part of the 50S ribosomal subunit.

In terms of biological role, binds 23S rRNA and is also seen to make contacts with the A and possibly P site tRNAs. The polypeptide is Large ribosomal subunit protein uL16 (Shewanella baltica (strain OS155 / ATCC BAA-1091)).